Reading from the N-terminus, the 114-residue chain is Superoxide dismutase [Cu-Zn] (114 aa).

Cu cation contacts are provided by His-37, His-39, and His-54. Residues 48 to 68 (CMSSGPHFNPRNKEHGAPTDE) are disordered. Residues His-54, His-62, His-71, and Asp-74 each coordinate Zn(2+). The span at 58-68 (RNKEHGAPTDE) shows a compositional bias: basic and acidic residues. His-111 serves as a coordination point for Cu cation.

This sequence belongs to the Cu-Zn superoxide dismutase family. Homodimer. Requires Cu cation as cofactor. Zn(2+) is required as a cofactor.

It localises to the cytoplasm. It carries out the reaction 2 superoxide + 2 H(+) = H2O2 + O2. In terms of biological role, destroys radicals which are normally produced within the cells and which are toxic to biological systems. This chain is Superoxide dismutase [Cu-Zn], found in Drosophila miranda (Fruit fly).